The chain runs to 808 residues: Dynamin-related protein 3A (808 aa).

A disordered region spans residues 1–31 (MTIEEVSGETPPSTPPSSSTPSPSSSTTNAA). Residues 16–28 (PSSSTPSPSSSTT) show a composition bias toward low complexity. The Dynamin-type G domain occupies 56–330 (TIALPQVVVV…LVQHIKVLLP (275 aa)). Residues 66–73 (GSQSSGKS) are G1 motif. Position 66-73 (66-73 (GSQSSGKS)) interacts with GTP. Residues 92 to 94 (CTR) are G2 motif. Residues 172 to 175 (DLPG) are G3 motif. Residues 172–176 (DLPGI) and 241–244 (TKLD) contribute to the GTP site. Positions 241–244 (TKLD) are G4 motif. Residues 271–274 (VNRC) are G5 motif. The tract at residues 548 to 578 (IPHPVARPKDTVEPDRTSSSTSQVKSRSFLG) is disordered. A compositionally biased stretch (basic and acidic residues) spans 554-563 (RPKDTVEPDR). Low complexity predominate over residues 564–575 (TSSSTSQVKSRS). The region spanning 670 to 761 (IQITKLLLRS…TLDELPLEAD (92 aa)) is the GED domain. Residues 774 to 808 (LTSSKYSTSSSYSASPSTTRRSRRAGDQHQNGYGF) form a disordered region. Positions 775 to 792 (TSSKYSTSSSYSASPSTT) are enriched in low complexity.

The protein belongs to the TRAFAC class dynamin-like GTPase superfamily. Dynamin/Fzo/YdjA family. Homooligomer. Interacts with ARC5 on peroxisomes and ELM1 on mitochondria. In terms of tissue distribution, ubiquitous. Preferentially expressed in flowers.

The protein localises to the mitochondrion. Its subcellular location is the peroxisome. In terms of biological role, involved in the control of mitochondrial and peroxisomal division and morphology. In association with PEX11C, PEX11D, PEX11E and FIS1B, is involved in cell cycle-associated constitutive self-replication of preexisting peroxisomes. This Arabidopsis thaliana (Mouse-ear cress) protein is Dynamin-related protein 3A (DRP3A).